The chain runs to 232 residues: Orotidine 5'-phosphate decarboxylase (232 aa).

Substrate contacts are provided by residues D11, K33, 61–70, T116, R179, Q188, G208, and R209; that span reads DMKLFDIGAT. Catalysis depends on K63, which acts as the Proton donor.

The protein belongs to the OMP decarboxylase family. Type 1 subfamily. Homodimer.

The catalysed reaction is orotidine 5'-phosphate + H(+) = UMP + CO2. It participates in pyrimidine metabolism; UMP biosynthesis via de novo pathway; UMP from orotate: step 2/2. Functionally, catalyzes the decarboxylation of orotidine 5'-monophosphate (OMP) to uridine 5'-monophosphate (UMP). The sequence is that of Orotidine 5'-phosphate decarboxylase from Cereibacter sphaeroides (strain ATCC 17023 / DSM 158 / JCM 6121 / CCUG 31486 / LMG 2827 / NBRC 12203 / NCIMB 8253 / ATH 2.4.1.) (Rhodobacter sphaeroides).